Reading from the N-terminus, the 162-residue chain is Caveolin-2 (162 aa).

Topologically, residues 1-86 are cytoplasmic; it reads MGLETEKADV…FEISKYVMYK (86 aa). Y19 bears the Phosphotyrosine; by SRC mark. S20 and S23 each carry phosphoserine. Position 27 is a phosphotyrosine; by SRC (Y27). Phosphoserine is present on S36. The segment at residues 87-107 is an intramembrane region (helical); sequence FLTVFLAIPLAFIAGILFATL. Residues 108-162 lie on the Cytoplasmic side of the membrane; sequence SCLHIWILMPFVKTCLMVLPSVQTIWKSVTDVIIAPLCTSVGRCFSSVSLQLSQD.

Belongs to the caveolin family. As to quaternary structure, monomer or homodimer. Interacts with CAV1; the interaction forms a stable heterooligomeric complex that is required for targeting to lipid rafts and for caveolae formation. Tyrosine phosphorylated forms do not form heterooligomers with the Tyr-19-phosphorylated form existing as a monomer or dimer, and the Tyr-27-form as a monomer only. Interacts (tyrosine phosphorylated form) with the SH2 domain-containing proteins, RASA1, NCK1 and SRC. Interacts (tyrosine phosphorylated form) with INSR, the interaction (Tyr-27-phosphorylated form) is increased on insulin stimulation. Interacts (Tyr-19 phosphorylated form) with MAPK1 (phosphorylated form); the interaction, promoted by insulin, leads to nuclear location and MAPK1 activation. Interacts with STAT3; the interaction is increased on insulin-induced tyrosine phosphorylation leading to STAT activation. Post-translationally, phosphorylated on serine and tyrosine residues. CAV1 promotes phosphorylation on Ser-23 which then targets the complex to the plasma membrane, lipid rafts and caveolae. Phosphorylation on Ser-36 appears to modulate mitosis in endothelial cells. Phosphorylation on both Tyr-19 and Tyr-27 is required for insulin-induced 'Ser-727' phosphorylation of STAT3 and its activation. Phosphorylation on Tyr-19 is required for insulin-induced phosphorylation of MAPK1 and DNA binding of STAT3. Tyrosine phosphorylation is induced by both EGF and insulin (By. similarity).

The protein localises to the nucleus. The protein resides in the cytoplasm. It is found in the golgi apparatus membrane. Its subcellular location is the cell membrane. It localises to the membrane. The protein localises to the caveola. May act as a scaffolding protein within caveolar membranes. Interacts directly with G-protein alpha subunits and can functionally regulate their activity. Acts as an accessory protein in conjunction with CAV1 in targeting to lipid rafts and driving caveolae formation. The Ser-36 phosphorylated form has a role in modulating mitosis in endothelial cells. Positive regulator of cellular mitogenesis of the MAPK signaling pathway. Required for the insulin-stimulated nuclear translocation and activation of MAPK1 and STAT3, and the subsequent regulation of cell cycle progression. In Gorilla gorilla gorilla (Western lowland gorilla), this protein is Caveolin-2 (CAV2).